The following is a 271-amino-acid chain: 4-diphosphocytidyl-2-C-methyl-D-erythritol kinase (271 aa).

Lysine 17 is an active-site residue. 97–107 contributes to the ATP binding site; sequence PVGSGLGGGSS. Aspartate 137 is an active-site residue.

The protein belongs to the GHMP kinase family. IspE subfamily.

The enzyme catalyses 4-CDP-2-C-methyl-D-erythritol + ATP = 4-CDP-2-C-methyl-D-erythritol 2-phosphate + ADP + H(+). The protein operates within isoprenoid biosynthesis; isopentenyl diphosphate biosynthesis via DXP pathway; isopentenyl diphosphate from 1-deoxy-D-xylulose 5-phosphate: step 3/6. Functionally, catalyzes the phosphorylation of the position 2 hydroxy group of 4-diphosphocytidyl-2C-methyl-D-erythritol. The polypeptide is 4-diphosphocytidyl-2-C-methyl-D-erythritol kinase (Thermotoga petrophila (strain ATCC BAA-488 / DSM 13995 / JCM 10881 / RKU-1)).